A 347-amino-acid polypeptide reads, in one-letter code: Melanoma-associated antigen B10 (347 aa).

Residues 1-18 (MPRGQKSKLRAREKRRQA) show a composition bias toward basic residues. Disordered regions lie at residues 1-20 (MPRGQKSKLRAREKRRQARG) and 56-92 (GASNNPHGLREAQSTSTSATAASHTRHPEGVNDQMEE). A compositionally biased stretch (low complexity) spans 67 to 78 (AQSTSTSATAAS). The span at 81-92 (RHPEGVNDQMEE) shows a compositional bias: basic and acidic residues. The 200-residue stretch at 111–310 (VDEKVIILVH…SEFSNWYTEA (200 aa)) folds into the MAGE domain. Residues 328-347 (VSATAGARSKVKSSKSSQLQ) form a disordered region.

This Homo sapiens (Human) protein is Melanoma-associated antigen B10 (MAGEB10).